The sequence spans 156 residues: Small ribosomal subunit protein uS7 (156 aa).

The protein belongs to the universal ribosomal protein uS7 family. As to quaternary structure, part of the 30S ribosomal subunit. Contacts proteins S9 and S11.

Functionally, one of the primary rRNA binding proteins, it binds directly to 16S rRNA where it nucleates assembly of the head domain of the 30S subunit. Is located at the subunit interface close to the decoding center, probably blocks exit of the E-site tRNA. In Phytoplasma mali (strain AT), this protein is Small ribosomal subunit protein uS7.